The sequence spans 586 residues: Anaerobic glycerol-3-phosphate dehydrogenase subunit A1 (586 aa).

FAD is bound at residue 6 to 34 (SVLVIGGGSTGTGIARDLAMRGLDVTLVE). Residues 559 to 586 (GGAVADGGRERAADRADDDALGGADGDN) form a disordered region. Residues 574–586 (ADDDALGGADGDN) are compositionally biased toward acidic residues.

This sequence belongs to the FAD-dependent glycerol-3-phosphate dehydrogenase family. As to quaternary structure, composed of a catalytic GlpA/B dimer and of membrane bound GlpC. It depends on FAD as a cofactor. The cofactor is FMN.

The protein localises to the cell membrane. The enzyme catalyses a quinone + sn-glycerol 3-phosphate = dihydroxyacetone phosphate + a quinol. Its pathway is polyol metabolism; glycerol degradation via glycerol kinase pathway; glycerone phosphate from sn-glycerol 3-phosphate (anaerobic route): step 1/1. Its activity is regulated as follows. Up-regulated by glycerol and no inhibition by glucose. Conversion of glycerol 3-phosphate to dihydroxyacetone phosphate. Required for growth on glycerol and for glycerol metabolism. The chain is Anaerobic glycerol-3-phosphate dehydrogenase subunit A1 (gpdA1) from Haloferax volcanii (strain ATCC 29605 / DSM 3757 / JCM 8879 / NBRC 14742 / NCIMB 2012 / VKM B-1768 / DS2) (Halobacterium volcanii).